Consider the following 129-residue polypeptide: Small ribosomal subunit protein uS11 (129 aa).

Belongs to the universal ribosomal protein uS11 family. In terms of assembly, part of the 30S ribosomal subunit. Interacts with proteins S7 and S18. Binds to IF-3.

Its function is as follows. Located on the platform of the 30S subunit, it bridges several disparate RNA helices of the 16S rRNA. Forms part of the Shine-Dalgarno cleft in the 70S ribosome. The protein is Small ribosomal subunit protein uS11 of Vibrio campbellii (strain ATCC BAA-1116).